The chain runs to 727 residues: Glucans biosynthesis glucosyltransferase H (727 aa).

Residues 18–38 (SAMPNERPGAMEPQNLSKMPE) form a disordered region. The next 7 helical transmembrane spans lie at 58–78 (FLVV…MGAV), 97–117 (VNFC…LILL), 278–298 (LQQF…GWWV), 408–428 (IMAY…LMLA), 460–480 (LFYI…LLLL), 496–516 (IFSV…MMFI), and 572–592 (LLAW…ISAW).

This sequence belongs to the glycosyltransferase 2 family. OpgH subfamily.

The protein localises to the cell inner membrane. It functions in the pathway glycan metabolism; osmoregulated periplasmic glucan (OPG) biosynthesis. In terms of biological role, involved in the biosynthesis of osmoregulated periplasmic glucans (OPGs). The sequence is that of Glucans biosynthesis glucosyltransferase H from Shewanella baltica (strain OS185).